The following is a 332-amino-acid chain: tRNA-dihydrouridine synthase B (332 aa).

Residues 19–21 (PMA) and Gln-73 each bind FMN. The active-site Proton donor is Cys-103. Residues Lys-142, 203–205 (NGD), and 227–228 (GR) contribute to the FMN site.

It belongs to the Dus family. DusB subfamily. FMN is required as a cofactor.

It catalyses the reaction a 5,6-dihydrouridine in tRNA + NAD(+) = a uridine in tRNA + NADH + H(+). The catalysed reaction is a 5,6-dihydrouridine in tRNA + NADP(+) = a uridine in tRNA + NADPH + H(+). Functionally, catalyzes the synthesis of 5,6-dihydrouridine (D), a modified base found in the D-loop of most tRNAs, via the reduction of the C5-C6 double bond in target uridines. The sequence is that of tRNA-dihydrouridine synthase B from Pseudomonas aeruginosa (strain ATCC 15692 / DSM 22644 / CIP 104116 / JCM 14847 / LMG 12228 / 1C / PRS 101 / PAO1).